A 60-amino-acid chain; its full sequence is Conotoxin Cl1.1 (60 aa).

The signal sequence occupies residues 1 to 19 (MRCLPVIVILLLLISSAAA). A propeptide spanning residues 20–48 (VVEGPLRVNRRLRPRKAPVDMQARDWNWG) is cleaved from the precursor.

It belongs to the conotoxin T superfamily. Post-translationally, contains 2 disulfide bonds. Expressed by the venom duct.

The protein localises to the secreted. This is Conotoxin Cl1.1 from Californiconus californicus (California cone).